The following is a 311-amino-acid chain: Ribonuclease Z (311 aa).

7 residues coordinate Zn(2+): His63, His65, Asp67, His68, His141, Asp212, and His270. Catalysis depends on Asp67, which acts as the Proton acceptor.

This sequence belongs to the RNase Z family. Homodimer. Zn(2+) serves as cofactor.

The enzyme catalyses Endonucleolytic cleavage of RNA, removing extra 3' nucleotides from tRNA precursor, generating 3' termini of tRNAs. A 3'-hydroxy group is left at the tRNA terminus and a 5'-phosphoryl group is left at the trailer molecule.. Zinc phosphodiesterase, which displays some tRNA 3'-processing endonuclease activity. Probably involved in tRNA maturation, by removing a 3'-trailer from precursor tRNA. This is Ribonuclease Z from Lactiplantibacillus plantarum (strain ATCC BAA-793 / NCIMB 8826 / WCFS1) (Lactobacillus plantarum).